We begin with the raw amino-acid sequence, 274 residues long: 4-hydroxy-3-methylbut-2-enyl diphosphate reductase (274 aa).

Cys12 serves as a coordination point for [4Fe-4S] cluster. His36 and His70 together coordinate (2E)-4-hydroxy-3-methylbut-2-enyl diphosphate. His36 and His70 together coordinate dimethylallyl diphosphate. Residues His36 and His70 each coordinate isopentenyl diphosphate. Cys92 contributes to the [4Fe-4S] cluster binding site. (2E)-4-hydroxy-3-methylbut-2-enyl diphosphate is bound at residue His120. His120 is a binding site for dimethylallyl diphosphate. His120 is a binding site for isopentenyl diphosphate. Glu122 serves as the catalytic Proton donor. Residue Thr158 coordinates (2E)-4-hydroxy-3-methylbut-2-enyl diphosphate. Cys186 is a binding site for [4Fe-4S] cluster. The (2E)-4-hydroxy-3-methylbut-2-enyl diphosphate site is built by Ser214, Ser215, Asn216, and Ser258. Residues Ser214, Ser215, Asn216, and Ser258 each contribute to the dimethylallyl diphosphate site. Isopentenyl diphosphate-binding residues include Ser214, Ser215, Asn216, and Ser258.

The protein belongs to the IspH family. It depends on [4Fe-4S] cluster as a cofactor.

It catalyses the reaction isopentenyl diphosphate + 2 oxidized [2Fe-2S]-[ferredoxin] + H2O = (2E)-4-hydroxy-3-methylbut-2-enyl diphosphate + 2 reduced [2Fe-2S]-[ferredoxin] + 2 H(+). The enzyme catalyses dimethylallyl diphosphate + 2 oxidized [2Fe-2S]-[ferredoxin] + H2O = (2E)-4-hydroxy-3-methylbut-2-enyl diphosphate + 2 reduced [2Fe-2S]-[ferredoxin] + 2 H(+). Its pathway is isoprenoid biosynthesis; dimethylallyl diphosphate biosynthesis; dimethylallyl diphosphate from (2E)-4-hydroxy-3-methylbutenyl diphosphate: step 1/1. The protein operates within isoprenoid biosynthesis; isopentenyl diphosphate biosynthesis via DXP pathway; isopentenyl diphosphate from 1-deoxy-D-xylulose 5-phosphate: step 6/6. Functionally, catalyzes the conversion of 1-hydroxy-2-methyl-2-(E)-butenyl 4-diphosphate (HMBPP) into a mixture of isopentenyl diphosphate (IPP) and dimethylallyl diphosphate (DMAPP). Acts in the terminal step of the DOXP/MEP pathway for isoprenoid precursor biosynthesis. This Campylobacter concisus (strain 13826) protein is 4-hydroxy-3-methylbut-2-enyl diphosphate reductase.